Reading from the N-terminus, the 410-residue chain is Bifunctional enzyme IspD/IspF (410 aa).

Positions 1 to 257 (MSHDPVVPSA…AGAGSASSRL (257 aa)) are 2-C-methyl-D-erythritol 4-phosphate cytidylyltransferase. A 2-C-methyl-D-erythritol 2,4-cyclodiphosphate synthase region spans residues 258 to 410 (RSGIGTDVHA…AVATALVERL (153 aa)). Positions 264 and 266 each coordinate a divalent metal cation. 4-CDP-2-C-methyl-D-erythritol 2-phosphate-binding positions include 264 to 266 (DVH) and 290 to 291 (HS). Histidine 298 serves as a coordination point for a divalent metal cation. 4-CDP-2-C-methyl-D-erythritol 2-phosphate is bound by residues 312 to 314 (DIG), 385 to 388 (TTTD), phenylalanine 392, and arginine 395.

The protein in the N-terminal section; belongs to the IspD/TarI cytidylyltransferase family. IspD subfamily. In the C-terminal section; belongs to the IspF family. It depends on a divalent metal cation as a cofactor.

The enzyme catalyses 2-C-methyl-D-erythritol 4-phosphate + CTP + H(+) = 4-CDP-2-C-methyl-D-erythritol + diphosphate. The catalysed reaction is 4-CDP-2-C-methyl-D-erythritol 2-phosphate = 2-C-methyl-D-erythritol 2,4-cyclic diphosphate + CMP. It functions in the pathway isoprenoid biosynthesis; isopentenyl diphosphate biosynthesis via DXP pathway; isopentenyl diphosphate from 1-deoxy-D-xylulose 5-phosphate: step 2/6. It participates in isoprenoid biosynthesis; isopentenyl diphosphate biosynthesis via DXP pathway; isopentenyl diphosphate from 1-deoxy-D-xylulose 5-phosphate: step 4/6. Functionally, bifunctional enzyme that catalyzes the formation of 4-diphosphocytidyl-2-C-methyl-D-erythritol from CTP and 2-C-methyl-D-erythritol 4-phosphate (MEP) (IspD), and catalyzes the conversion of 4-diphosphocytidyl-2-C-methyl-D-erythritol 2-phosphate (CDP-ME2P) to 2-C-methyl-D-erythritol 2,4-cyclodiphosphate (ME-CPP) with a corresponding release of cytidine 5-monophosphate (CMP) (IspF). The sequence is that of Bifunctional enzyme IspD/IspF from Clavibacter michiganensis subsp. michiganensis (strain NCPPB 382).